A 126-amino-acid chain; its full sequence is Fluoride-specific ion channel FluC 2 (126 aa).

4 consecutive transmembrane segments (helical) span residues 11–31 (IFLI…LCEL), 34–54 (GQLG…MIMY), 66–86 (GKIA…TFAV), and 93–113 (FIPA…GVFF). G76 and T79 together coordinate Na(+).

This sequence belongs to the fluoride channel Fluc/FEX (TC 1.A.43) family.

The protein localises to the cell membrane. The catalysed reaction is fluoride(in) = fluoride(out). Na(+) is not transported, but it plays an essential structural role and its presence is essential for fluoride channel function. In terms of biological role, fluoride-specific ion channel. Important for reducing fluoride concentration in the cell, thus reducing its toxicity. In Methanosarcina acetivorans (strain ATCC 35395 / DSM 2834 / JCM 12185 / C2A), this protein is Fluoride-specific ion channel FluC 2.